A 574-amino-acid polypeptide reads, in one-letter code: K(+)/H(+) antiporter NhaP2 (574 aa).

13 helical membrane-spanning segments follow: residues 6-26, 34-54, 58-78, 87-107, 109-129, 173-193, 196-216, 219-239, 242-262, 271-291, 299-319, 335-355, and 359-379; these read INSF…LSPM, ILLI…GGIL, YSTA…DGGM, VALW…TSIT, VMAA…GAIV, IAIL…ISFI, FGLG…LVNV, LAEG…YATS, LGGS…NKPT, VLDG…GLLL, IWLP…PLAV, WFIS…VFPM, and LPGA…SLLV. One can recognise an RCK C-terminal domain in the interval 405–486; sequence SGVEIYPKSE…LEALSNLFSQ (82 aa).

The protein belongs to the monovalent cation:proton antiporter 1 (CPA1) transporter (TC 2.A.36) family. NhaP2 subfamily.

Its subcellular location is the cell inner membrane. It carries out the reaction K(+)(in) + H(+)(out) = K(+)(out) + H(+)(in). Its function is as follows. K(+)/H(+) antiporter that extrudes potassium in exchange for external protons and maintains the internal concentration of potassium under toxic levels. This chain is K(+)/H(+) antiporter NhaP2, found in Shewanella oneidensis (strain ATCC 700550 / JCM 31522 / CIP 106686 / LMG 19005 / NCIMB 14063 / MR-1).